The sequence spans 968 residues: Glycine dehydrogenase (decarboxylating) (968 aa).

The residue at position 713 (K713) is an N6-(pyridoxal phosphate)lysine.

This sequence belongs to the GcvP family. The glycine cleavage system is composed of four proteins: P, T, L and H. Requires pyridoxal 5'-phosphate as cofactor.

The enzyme catalyses N(6)-[(R)-lipoyl]-L-lysyl-[glycine-cleavage complex H protein] + glycine + H(+) = N(6)-[(R)-S(8)-aminomethyldihydrolipoyl]-L-lysyl-[glycine-cleavage complex H protein] + CO2. In terms of biological role, the glycine cleavage system catalyzes the degradation of glycine. The P protein binds the alpha-amino group of glycine through its pyridoxal phosphate cofactor; CO(2) is released and the remaining methylamine moiety is then transferred to the lipoamide cofactor of the H protein. The protein is Glycine dehydrogenase (decarboxylating) of Variovorax paradoxus (strain S110).